Consider the following 158-residue polypeptide: Transcription elongation factor GreA (158 aa).

Positions 2–70 (ENQKQYPMTQ…IEQDIQRIEH (69 aa)) form a coiled coil.

This sequence belongs to the GreA/GreB family.

Its function is as follows. Necessary for efficient RNA polymerase transcription elongation past template-encoded arresting sites. The arresting sites in DNA have the property of trapping a certain fraction of elongating RNA polymerases that pass through, resulting in locked ternary complexes. Cleavage of the nascent transcript by cleavage factors such as GreA or GreB allows the resumption of elongation from the new 3'terminus. GreA releases sequences of 2 to 3 nucleotides. This chain is Transcription elongation factor GreA, found in Staphylococcus epidermidis (strain ATCC 35984 / DSM 28319 / BCRC 17069 / CCUG 31568 / BM 3577 / RP62A).